An 83-amino-acid chain; its full sequence is Putative beta-neurotoxin RjAa17f (83 aa).

The N-terminal stretch at 1–18 (MKILIFIIASFMLIGVEC) is a signal peptide. The region spanning 19–82 (KEGYPMGRNG…VWDFSNIKCR (64 aa)) is the LCN-type CS-alpha/beta domain. Disulfide bonds link C29–C81, C33–C55, C40–C62, and C44–C64.

Belongs to the long (4 C-C) scorpion toxin superfamily. Sodium channel inhibitor family. Beta subfamily. Expressed by the venom gland.

The protein resides in the secreted. Its function is as follows. Beta toxins bind voltage-independently at site-4 of sodium channels (Nav) and shift the voltage of activation toward more negative potentials thereby affecting sodium channel activation and promoting spontaneous and repetitive firing. This chain is Putative beta-neurotoxin RjAa17f, found in Rhopalurus junceus (Caribbean blue scorpion).